The chain runs to 485 residues: Glutamyl-tRNA(Gln) amidotransferase subunit A (485 aa).

Active-site charge relay system residues include Lys-79 and Ser-154. Ser-178 (acyl-ester intermediate) is an active-site residue.

The protein belongs to the amidase family. GatA subfamily. In terms of assembly, heterotrimer of A, B and C subunits.

The enzyme catalyses L-glutamyl-tRNA(Gln) + L-glutamine + ATP + H2O = L-glutaminyl-tRNA(Gln) + L-glutamate + ADP + phosphate + H(+). Allows the formation of correctly charged Gln-tRNA(Gln) through the transamidation of misacylated Glu-tRNA(Gln) in organisms which lack glutaminyl-tRNA synthetase. The reaction takes place in the presence of glutamine and ATP through an activated gamma-phospho-Glu-tRNA(Gln). In Clostridium botulinum (strain Okra / Type B1), this protein is Glutamyl-tRNA(Gln) amidotransferase subunit A.